A 192-amino-acid polypeptide reads, in one-letter code: Transcription antitermination protein NusB (192 aa).

Belongs to the NusB family.

Involved in transcription antitermination. Required for transcription of ribosomal RNA (rRNA) genes. Binds specifically to the boxA antiterminator sequence of the ribosomal RNA (rrn) operons. This Lactococcus lactis subsp. lactis (strain IL1403) (Streptococcus lactis) protein is Transcription antitermination protein NusB.